The sequence spans 214 residues: Protein-L-isoaspartate O-methyltransferase (214 aa).

Serine 61 is an active-site residue.

Belongs to the methyltransferase superfamily. L-isoaspartyl/D-aspartyl protein methyltransferase family.

Its subcellular location is the cytoplasm. It catalyses the reaction [protein]-L-isoaspartate + S-adenosyl-L-methionine = [protein]-L-isoaspartate alpha-methyl ester + S-adenosyl-L-homocysteine. Functionally, catalyzes the methyl esterification of L-isoaspartyl residues in peptides and proteins that result from spontaneous decomposition of normal L-aspartyl and L-asparaginyl residues. It plays a role in the repair and/or degradation of damaged proteins. In Paramagnetospirillum magneticum (strain ATCC 700264 / AMB-1) (Magnetospirillum magneticum), this protein is Protein-L-isoaspartate O-methyltransferase.